Consider the following 968-residue polypeptide: Glycine dehydrogenase (decarboxylating) (968 aa).

N6-(pyridoxal phosphate)lysine is present on Lys-717.

The protein belongs to the GcvP family. The glycine cleavage system is composed of four proteins: P, T, L and H. The cofactor is pyridoxal 5'-phosphate.

The enzyme catalyses N(6)-[(R)-lipoyl]-L-lysyl-[glycine-cleavage complex H protein] + glycine + H(+) = N(6)-[(R)-S(8)-aminomethyldihydrolipoyl]-L-lysyl-[glycine-cleavage complex H protein] + CO2. Functionally, the glycine cleavage system catalyzes the degradation of glycine. The P protein binds the alpha-amino group of glycine through its pyridoxal phosphate cofactor; CO(2) is released and the remaining methylamine moiety is then transferred to the lipoamide cofactor of the H protein. This chain is Glycine dehydrogenase (decarboxylating), found in Tropheryma whipplei (strain TW08/27) (Whipple's bacillus).